The primary structure comprises 419 residues: Effector protein BipC (419 aa).

Disordered stretches follow at residues 62 to 91 (VAGS…TVSG) and 338 to 402 (LQSG…AKSQ). Basic and acidic residues-rich tracts occupy residues 71–91 (ELAR…TVSG) and 380–392 (TRDE…REAA).

The protein belongs to the SctB/SipC family.

The protein localises to the secreted. This Burkholderia mallei (strain NCTC 10247) protein is Effector protein BipC (bipC).